The sequence spans 843 residues: Envelope glycoprotein gp160 (843 aa).

The first 33 residues, 1–33 (MRVREMQRNWQHLGKWGLLFLGILIICNANATD), serve as a signal peptide directing secretion. N30 carries N-linked (GlcNAc...) asparagine; by host glycosylation. Residues 34 to 671 (DLWVTVYYGV…ITNWLWYIKI (638 aa)) are Extracellular-facing. Residues C55 and C75 are joined by a disulfide bond. 18 N-linked (GlcNAc...) asparagine; by host glycosylation sites follow: N89, N131, N136, N143, N156, N160, N186, N197, N234, N262, N276, N289, N301, N333, N338, N343, N353, and N359. 5 cysteine pairs are disulfide-bonded: C120–C205, C127–C196, C132–C157, C218–C247, and C228–C239. Residues 132–156 (CTDVNITMSDINGTSLKEDQGEIKN) form a V1 region. Residues 157–196 (CSFNVTTELKDKKRKQQALFYRLDVEPIKNSSNIYKLISC) form a V2 region. The interval 296–329 (CRRPNNNTRKGIRIGPGQTFFATGEIIGDIRKAY) is V3. Residues C296 and C330 are joined by a disulfide bond. The interval 361–371 (SSGGDVEITTH) is CD4-binding loop. C375 and C432 form a disulfide bridge. Positions 382–405 (YNTSGLFNETEVANNTNENITLPC) are V4. N-linked (GlcNAc...) asparagine; by host glycans are attached at residues N383, N389, N395, N400, and N435. V5 stretches follow at residues 448–458 (DIDGKEILRPI) and 450–458 (DGKEILRPI). A fusion peptide region spans residues 499–519 (AVGMGAVLFGFLGAAGSTMGA). The immunosuppression stretch occupies residues 561 to 579 (KQLQARILAVERYLKDQQL). C585 and C591 form a disulfide bridge. Residues N598, N603, N612, and N624 are each glycosylated (N-linked (GlcNAc...) asparagine; by host). Positions 620 to 654 (KEIDNYTKTIYSLIEDAQNQQERNEQELLALDKWD) form a coiled coil. The interval 649 to 670 (ALDKWDSLWSWFSITNWLWYIK) is MPER; binding to GalCer. Residues 672 to 692 (FIMIVGGLIGLRIVFAVLSVV) form a helical membrane-spanning segment. Topologically, residues 693 to 843 (NRVRQGYSPL…IRQGAERFLL (151 aa)) are cytoplasmic. Positions 699–702 (YSPL) match the YXXL motif; contains endocytosis signal motif. Residues 709–731 (PNPRGPDRPGGIEEEGGEPDRDR) form a disordered region. The S-palmitoyl cysteine; by host moiety is linked to residue C751. The short motif at 842–843 (LL) is the Di-leucine internalization motif element.

It belongs to the HIV-1 env protein family. In terms of assembly, the mature envelope protein (Env) consists of a homotrimer of non-covalently associated gp120-gp41 heterodimers. The resulting complex protrudes from the virus surface as a spike. There seems to be as few as 10 spikes on the average virion. Interacts with host CD4, CCR5 and CXCR4. Gp120 also interacts with the C-type lectins CD209/DC-SIGN and CLEC4M/DC-SIGNR (collectively referred to as DC-SIGN(R)). Gp120 and gp41 interact with GalCer. Gp120 interacts with host ITGA4/ITGB7 complex; on CD4+ T-cells, this interaction results in rapid activation of integrin ITGAL/LFA-1, which facilitates efficient cell-to-cell spreading of HIV-1. Gp120 interacts with cell-associated heparan sulfate; this interaction increases virus infectivity on permissive cells and may be involved in infection of CD4- cells. As to quaternary structure, the mature envelope protein (Env) consists of a homotrimer of non-covalently associated gp120-gp41 heterodimers. The resulting complex protrudes from the virus surface as a spike. There seems to be as few as 10 spikes on the average virion. Post-translationally, highly glycosylated by host. The high number of glycan on the protein is reffered to as 'glycan shield' because it contributes to hide protein sequence from adaptive immune system. In terms of processing, palmitoylation of the transmembrane protein and of Env polyprotein (prior to its proteolytic cleavage) is essential for their association with host cell membrane lipid rafts. Palmitoylation is therefore required for envelope trafficking to classical lipid rafts, but not for viral replication. Specific enzymatic cleavages in vivo yield mature proteins. Envelope glycoproteins are synthesized as an inactive precursor that is heavily N-glycosylated and processed likely by host cell furin in the Golgi to yield the mature SU and TM proteins. The cleavage site between SU and TM requires the minimal sequence [KR]-X-[KR]-R. About 2 of the 9 disulfide bonds of gp41 are reduced by P4HB/PDI, following binding to CD4 receptor.

The protein localises to the virion membrane. It is found in the host cell membrane. Its subcellular location is the host endosome membrane. Its function is as follows. Oligomerizes in the host endoplasmic reticulum into predominantly trimers. In a second time, gp160 transits in the host Golgi, where glycosylation is completed. The precursor is then proteolytically cleaved in the trans-Golgi and thereby activated by cellular furin or furin-like proteases to produce gp120 and gp41. Attaches the virus to the host lymphoid cell by binding to the primary receptor CD4. This interaction induces a structural rearrangement creating a high affinity binding site for a chemokine coreceptor like CXCR4 and/or CCR5. Acts as a ligand for CD209/DC-SIGN and CLEC4M/DC-SIGNR, which are respectively found on dendritic cells (DCs), and on endothelial cells of liver sinusoids and lymph node sinuses. These interactions allow capture of viral particles at mucosal surfaces by these cells and subsequent transmission to permissive cells. HIV subverts the migration properties of dendritic cells to gain access to CD4+ T-cells in lymph nodes. Virus transmission to permissive T-cells occurs either in trans (without DCs infection, through viral capture and transmission), or in cis (following DCs productive infection, through the usual CD4-gp120 interaction), thereby inducing a robust infection. In trans infection, bound virions remain infectious over days and it is proposed that they are not degraded, but protected in non-lysosomal acidic organelles within the DCs close to the cell membrane thus contributing to the viral infectious potential during DCs' migration from the periphery to the lymphoid tissues. On arrival at lymphoid tissues, intact virions recycle back to DCs' cell surface allowing virus transmission to CD4+ T-cells. Functionally, acts as a class I viral fusion protein. Under the current model, the protein has at least 3 conformational states: pre-fusion native state, pre-hairpin intermediate state, and post-fusion hairpin state. During fusion of viral and target intracellular membranes, the coiled coil regions (heptad repeats) assume a trimer-of-hairpins structure, positioning the fusion peptide in close proximity to the C-terminal region of the ectodomain. The formation of this structure appears to drive apposition and subsequent fusion of viral and target cell membranes. Complete fusion occurs in host cell endosomes and is dynamin-dependent, however some lipid transfer might occur at the plasma membrane. The virus undergoes clathrin-dependent internalization long before endosomal fusion, thus minimizing the surface exposure of conserved viral epitopes during fusion and reducing the efficacy of inhibitors targeting these epitopes. Membranes fusion leads to delivery of the nucleocapsid into the cytoplasm. The polypeptide is Envelope glycoprotein gp160 (Homo sapiens (Human)).